Consider the following 170-residue polypeptide: Flavin reductase (NADPH) (170 aa).

The protein belongs to the non-flavoprotein flavin reductase family.

It catalyses the reaction reduced riboflavin + NADP(+) = riboflavin + NADPH + 2 H(+). Functionally, catalyzes the NADH-dependent reduction of FAD to provide FADH2 for the halogenase RebH. This is Flavin reductase (NADPH) (rbmH) from Lentzea aerocolonigenes (Lechevalieria aerocolonigenes).